The sequence spans 167 residues: NAD(P)H-quinone oxidoreductase subunit I, chloroplastic (167 aa).

4Fe-4S ferredoxin-type domains are found at residues 55-84 (GRIHFEFDKCIACEVCVRVCPIDLPVVDWK) and 95-124 (LNYSIDFGICIFCGNCVEYCPTNCLSMTEE). 8 residues coordinate [4Fe-4S] cluster: cysteine 64, cysteine 67, cysteine 70, cysteine 74, cysteine 104, cysteine 107, cysteine 110, and cysteine 114.

This sequence belongs to the complex I 23 kDa subunit family. NDH is composed of at least 16 different subunits, 5 of which are encoded in the nucleus. Requires [4Fe-4S] cluster as cofactor.

The protein localises to the plastid. It localises to the chloroplast thylakoid membrane. It catalyses the reaction a plastoquinone + NADH + (n+1) H(+)(in) = a plastoquinol + NAD(+) + n H(+)(out). The enzyme catalyses a plastoquinone + NADPH + (n+1) H(+)(in) = a plastoquinol + NADP(+) + n H(+)(out). Functionally, NDH shuttles electrons from NAD(P)H:plastoquinone, via FMN and iron-sulfur (Fe-S) centers, to quinones in the photosynthetic chain and possibly in a chloroplast respiratory chain. The immediate electron acceptor for the enzyme in this species is believed to be plastoquinone. Couples the redox reaction to proton translocation, and thus conserves the redox energy in a proton gradient. This chain is NAD(P)H-quinone oxidoreductase subunit I, chloroplastic, found in Aethionema cordifolium (Lebanon stonecress).